A 420-amino-acid polypeptide reads, in one-letter code: MSSPRDFRAEPVNDYEGNDSEAEDLNFRETLPSSSQENTPRSKVFENKVNSEKVKLSLRNFPHNDYEDVFEEPSESGSDPSMWTARGPFRRDRWSSEDEEAAGPSQALSPLLSDTRKIVSEGELDQLAQIRPLIFNFHEQTAIKDCLKILEEKTAAYDIMQEFMALELKNLPGEFNSGNQPSNREKNRYRDILPYDSTRVPLGKSKDYINASYIRIVNCGEEYFYIATQGPLLSTIDDFWQMVLENNSNVIAMITREIEGGIIKCYHYWPISLKKPLELKHFRVFLENYQILQYFIIRMFQVVEKSTGTSHSVKQLQFTKWPDHGTPASADSFIKYIRYARKSHLTGPMVVHCSAGIGRTGVFLCVDVVFCAIVKNCSFNIMDIVAQMREQRSGMVQTKEQYHFCYDIVLEVLRKLLTLD.

Basic and acidic residues predominate over residues 1–11 (MSSPRDFRAEP). 2 disordered regions span residues 1–47 (MSSP…VFEN) and 68–108 (DVFE…SQAL). Positions 31-41 (LPSSSQENTPR) are enriched in polar residues. A phosphoserine mark is found at serine 76 and serine 120. Residues 159–412 (IMQEFMALEL…HFCYDIVLEV (254 aa)) enclose the Tyrosine-protein phosphatase domain. Substrate contacts are provided by residues aspartate 323, 353 to 359 (CSAGIGR), and glutamine 397. Cysteine 353 functions as the Phosphocysteine intermediate in the catalytic mechanism.

Belongs to the protein-tyrosine phosphatase family. Non-receptor class subfamily. Present in many cell lines (at protein level). Widely expressed.

It is found in the nucleus. The protein localises to the cytoplasm. It localises to the cytoskeleton. Its subcellular location is the microtubule organizing center. The protein resides in the centrosome. It catalyses the reaction O-phospho-L-tyrosyl-[protein] + H2O = L-tyrosyl-[protein] + phosphate. Tyrosine-protein phosphatase targeted to sites of actin polymerization in response of varied extracellular stimuli. Has tyrosine phosphatase activity towards various tyrosyl phosphorylated substrates. The protein is Tyrosine-protein phosphatase non-receptor type 20 of Homo sapiens (Human).